A 619-amino-acid polypeptide reads, in one-letter code: Probable galacturonosyltransferase 7 (619 aa).

At 1-19 (MKGGGGGGGGGGGGKRRWK) the chain is on the cytoplasmic side. A helical; Signal-anchor for type II membrane protein membrane pass occupies residues 20–40 (VLVIGVLVLVILSMLVPLAFL). At 41 to 619 (LGLHNGFHSP…RFLSDCNVNP (579 aa)) the chain is on the lumenal side. 5 N-linked (GlcNAc...) asparagine glycosylation sites follow: Asn-68, Asn-106, Asn-132, Asn-343, and Asn-421. Positions 95–139 (KSDINVGSRDVNATSGTDSKKRGLPVSPTVVANPSPANKTKSEAS) are disordered. The span at 124–139 (VVANPSPANKTKSEAS) shows a compositional bias: polar residues.

It belongs to the glycosyltransferase 8 family. In terms of tissue distribution, expressed in roots, inflorescences, flowers, siliques, leaves and stems.

Its subcellular location is the golgi apparatus membrane. Its pathway is glycan metabolism; pectin biosynthesis. In terms of biological role, may be involved in pectin biosynthesis. The sequence is that of Probable galacturonosyltransferase 7 (GAUT7) from Arabidopsis thaliana (Mouse-ear cress).